We begin with the raw amino-acid sequence, 317 residues long: MINFKKQIMKKTTFFLCAMLLVSSILIAPRSSLAYPFWAQQNYESPREATGKIVCANCHLAQMPTIAEVPQAVGADSVFKAVVKIPYKDDIKEIGADGSEVPLQVGAVVMLPDGFKLAPQERWTDEIKEETEGVYFTNYSEEKENIIIVGPLPGDTNKEIIFPVLSPNPATNKEYHYGKYSLHIGGNRGRGQVYPTGDKSNNVIFTSSSAGTINSIETIEDGSYQINIENENGEITTEAVPVGPKLIVKEQDQITVGAPLTSDPNVGGFGQLDAEVVLQSPYRIIGLIAFFIGVGLTQILLVLKKKQVEKVQAAEGI.

Positions 1-34 (MINFKKQIMKKTTFFLCAMLLVSSILIAPRSSLA) are cleaved as a signal peptide. Residues Y35, C55, C58, and H59 each contribute to the heme site. Residues 284–304 (IIGLIAFFIGVGLTQILLVLK) form a helical membrane-spanning segment.

Belongs to the cytochrome f family. In terms of assembly, the 4 large subunits of the cytochrome b6-f complex are cytochrome b6, subunit IV (17 kDa polypeptide, PetD), cytochrome f and the Rieske protein, while the 4 small subunits are PetG, PetL, PetM and PetN. The complex functions as a dimer. It depends on heme as a cofactor.

The protein localises to the cellular thylakoid membrane. In terms of biological role, component of the cytochrome b6-f complex, which mediates electron transfer between photosystem II (PSII) and photosystem I (PSI), cyclic electron flow around PSI, and state transitions. The polypeptide is Cytochrome f (Prochlorococcus marinus (strain MIT 9515)).